A 101-amino-acid polypeptide reads, in one-letter code: Protamine-3 (101 aa).

Residues 1 to 101 (MGSRCAKLST…PSPEPKQTHS (101 aa)) are disordered. Acidic residues predominate over residues 45 to 67 (EGEEEEEDEEEEEEEEEEEEEEQ). A Phosphoserine modification is found at serine 93.

The protein belongs to the protamine P3 family. Testis.

It localises to the nucleus. The protein localises to the chromosome. Protamines substitute for histones in the chromatin of sperm during the haploid phase of spermatogenesis. They compact sperm DNA into a highly condensed, stable and inactive complex. The sequence is that of Protamine-3 (Prm3) from Mus musculus (Mouse).